The primary structure comprises 284 residues: Bifunctional protein FolD (284 aa).

NADP(+) contacts are provided by residues 166–168 (GAS) and isoleucine 232.

The protein belongs to the tetrahydrofolate dehydrogenase/cyclohydrolase family. Homodimer.

It carries out the reaction (6R)-5,10-methylene-5,6,7,8-tetrahydrofolate + NADP(+) = (6R)-5,10-methenyltetrahydrofolate + NADPH. The catalysed reaction is (6R)-5,10-methenyltetrahydrofolate + H2O = (6R)-10-formyltetrahydrofolate + H(+). It participates in one-carbon metabolism; tetrahydrofolate interconversion. Catalyzes the oxidation of 5,10-methylenetetrahydrofolate to 5,10-methenyltetrahydrofolate and then the hydrolysis of 5,10-methenyltetrahydrofolate to 10-formyltetrahydrofolate. This Pseudomonas fluorescens (strain Pf0-1) protein is Bifunctional protein FolD.